Consider the following 710-residue polypeptide: Zinc finger and BTB domain-containing protein 24 (710 aa).

Residues 37-103 (CDITLIVENV…IYTGYLHASE (67 aa)) enclose the BTB domain. Disordered stretches follow at residues 134–176 (APKP…EGRS) and 202–256 (EEDS…SRRR). A DNA-binding region (a.T hook) is located at residues 159–171 (KRKRGRPRKANGL). 2 stretches are compositionally biased toward basic and acidic residues: residues 202-219 (EEDSVKLSEQTPEDKESE) and 231-244 (PAEKDENFDPKAGD). 8 C2H2-type zinc fingers span residues 293–315 (ARCKDCDRVFKYSHFLAIHQRRH), 321–343 (FKCNECGKGFAQKHSLQVHTRMH), 349–371 (YTCTVCGKALTTKHSLLEHMSLH), 377–399 (FTCDQCGKYFSQKRQLKSHYRVH), 405–427 (PECSHCHRKFMDVSQLKKHLRTH), 433–455 (FTCEICGKSFTAKSSLQTHIRIH), 461–483 (YSCSICGKCFSDSSAKRRHCILH), and 489–511 (FSCPECGLQFARLDNLKAHLKIH). Positions 651 to 676 (EQTTSSVPAADTGARATPVPSTRPGA) are disordered.

It belongs to the krueppel C2H2-type zinc-finger protein family. As to quaternary structure, interacts with MN1. As to expression, widely expressed. Highest level in liver, testis and kidney.

The protein localises to the nucleus. In terms of biological role, may be involved in BMP2-induced transcription. This chain is Zinc finger and BTB domain-containing protein 24 (Zbtb24), found in Mus musculus (Mouse).